The primary structure comprises 572 residues: Probable inactive glycosyltransferase 25 family member 3 (572 aa).

4 N-linked (GlcNAc...) asparagine glycosylation sites follow: N52, N130, N214, and N337. The Prevents secretion from ER signature appears at 569 to 572 (RDEL).

Belongs to the glycosyltransferase 25 family.

The protein localises to the endoplasmic reticulum lumen. In terms of biological role, probable cell adhesion protein involved in leukocyte transmigration across the blood-brain barrier. Does not express any beta-galactosyltransferase activity in vitro. The protein is Probable inactive glycosyltransferase 25 family member 3 (Cercam) of Rattus norvegicus (Rat).